We begin with the raw amino-acid sequence, 466 residues long: Cysteine--tRNA ligase (466 aa).

Residue Cys28 coordinates Zn(2+). The 'HIGH' region motif lies at 30-40; that stretch reads PTVYNFFHIGN. 3 residues coordinate Zn(2+): Cys208, His233, and Glu237. A 'KMSKS' region motif is present at residues 265–269; the sequence is KMSKS. Lys268 is an ATP binding site.

It belongs to the class-I aminoacyl-tRNA synthetase family. As to quaternary structure, monomer. It depends on Zn(2+) as a cofactor.

It is found in the cytoplasm. It catalyses the reaction tRNA(Cys) + L-cysteine + ATP = L-cysteinyl-tRNA(Cys) + AMP + diphosphate. In Clostridium perfringens (strain SM101 / Type A), this protein is Cysteine--tRNA ligase.